The following is a 1630-amino-acid chain: Probable phosphoinositide phosphatase SAC9 (1630 aa).

Residues 147–527 (LTELDIDGKH…ADAVTGKSYY (381 aa)) enclose the SAC domain. Residues 456-467 (RFNCADSLDRTN) carry the Phosphatase catalytic core; degenerate motif. Residues 508–542 (APLPPGWEKRADAVTGKSYYIDHNTKTTTWSHPCP) form the WW domain.

As to expression, ubiquitous. Most abundant in the roots with lower expression levels throughout the leaves and shoot.

In terms of biological role, probable phosphoinositide phosphatase that could be involved in stress signaling. This chain is Probable phosphoinositide phosphatase SAC9 (SAC9), found in Arabidopsis thaliana (Mouse-ear cress).